A 1816-amino-acid polypeptide reads, in one-letter code: Kinesin-like protein KIF1B (1816 aa).

At S2 the chain carries N-acetylserine. Residues 5–354 enclose the Kinesin motor domain; it reads SVKVAVRVRP…LRYADRAKQI (350 aa). 97 to 104 provides a ligand contact to ATP; that stretch reads GQTGAGKS. The interaction with KIFBP stretch occupies residues 270–350; sequence NINKSLTTLG…TLSTLRYADR (81 aa). The interval 431 to 450 is disordered; sequence FSTASMGSLTSSPSSCSLNS. The segment covering 432–450 has biased composition (low complexity); sequence STASMGSLTSSPSSCSLNS. Positions 470 to 512 form a coiled coil; it reads GEEAIERLKESEKIIAELNETWEEKLRKTEAIRMEREALLAEM. The region spanning 556–612 is the FHA domain; sequence TRVGQADAERRQDIVLSGAHIKEEHCIFRSERNNTGEVIVTLEPCERSETYVNGKRV. Phosphothreonine is present on residues T647 and T652. Residues 672 to 731 adopt a coiled-coil conformation; it reads IDMKQEMEKRLQEMEILYKREKEEADLLLEQQRLDYESKLQALQKQVETRSLAAETTEEE. 5 positions are modified to phosphoserine: S1054, S1057, S1416, S1454, and S1487. The disordered stretch occupies residues 1550–1570; sequence STTTFESAITPSESSGYDSAD. A phosphoserine mark is found at S1573, S1603, S1610, and S1613. Over residues 1620 to 1637 the composition is skewed to low complexity; that stretch reads SVSSFSSSTLTPSSTCPS. The interval 1620–1659 is disordered; it reads SVSSFSSSTLTPSSTCPSLVDSRSSSMDQKTPEANSRASS. Residues 1640-1659 are compositionally biased toward polar residues; it reads DSRSSSMDQKTPEANSRASS. The region spanning 1701–1799 is the PH domain; the sequence is VVSKKGYLHF…WLYAFNPLLA (99 aa).

Belongs to the TRAFAC class myosin-kinesin ATPase superfamily. Kinesin family. Unc-104 subfamily. In terms of assembly, monomer. Interacts with KIFBP; positively regulates KIF1B microtubule motor activity. Interacts (via C-terminus end of the kinesin-motor domain) with CHP1; the interaction occurs in a calcium-dependent manner. Interacts with MADD (via death domain); links this isoform of KIF1B to Rab3-carrying vesicles in anterograde synaptic vesicle transport. As to expression, expressed in the brain with lower expression in testis and liver (at protein level). Strongly expressed in the brain and ovary, with lower expression in lung, kidney, uterus, testis and liver. In terms of tissue distribution, isoform 2 is expressed in non-neuronal tissues.

The protein localises to the cytoplasm. The protein resides in the cytoskeleton. It localises to the cytoplasmic vesicle. It is found in the secretory vesicle. Its subcellular location is the synaptic vesicle membrane. The protein localises to the lysosome. The catalysed reaction is ATP + H2O + a kinesin associated with a microtubule at position (n) = ADP + phosphate a kinesin associated with a microtubule at position (n+1, toward the plus end).. In terms of biological role, has a plus-end-directed microtubule motor activity and functions as a motor for transport of vesicles and organelles along microtubules. Has a plus-end-directed microtubule motor activity and functions as a motor for anterograde synaptic vesicle transport along axonal microtubules from the cell body to the presynapse in neuronal cells. Functionally, has a plus-end-directed microtubule motor activity and functions as a motor for the translocation of lysosomes from perinuclear regions to the cell periphery. The chain is Kinesin-like protein KIF1B from Rattus norvegicus (Rat).